Reading from the N-terminus, the 302-residue chain is Vomeronasal type-1 receptor 48 (302 aa).

Residues 1 to 16 (MNENSRLHTHSNIRNT) are Extracellular-facing. The helical transmembrane segment at 17–37 (FFSEIGIGISGNSFLLLFHII) threads the bilayer. At 38–49 (KFFRGHRPRLTD) the chain is on the cytoplasmic side. Residues 50 to 70 (LPIGLLSLIHLLMLLVAAVIA) form a helical membrane-spanning segment. At 71–91 (TDIFISWRGWNDIICKFLVYL) the chain is on the extracellular side. C85 and C172 are joined by a disulfide. The chain crosses the membrane as a helical span at residues 92 to 114 (YRSLRGLSLCTTSMLSVLQAIIL). Residues 115 to 131 (SPRSYCLAKFKRKSSHN) lie on the Cytoplasmic side of the membrane. A helical transmembrane segment spans residues 132–152 (ISCAIIFLSVLYMSISSHLLI). The Extracellular portion of the chain corresponds to 153–193 (SITATPNLTMNDFLYVSQSCSLLPLSYLMQSIYSTLLVLRE). N159 is a glycosylation site (N-linked (GlcNAc...) asparagine). The chain crosses the membrane as a helical span at residues 194-214 (VFLIGLMVLSTSYMVALLYMH). At 215 to 238 (RKQAQNLQGTSLSLKASAEQRATQ) the chain is on the cytoplasmic side. A helical transmembrane segment spans residues 239–259 (TILMLMTFFVLMSIFDSIVSC). The Extracellular portion of the chain corresponds to 260 to 269 (SRTMFLDDPT). Residues 270–290 (SYSIHIFVMHIYATVSPFVFI) form a helical membrane-spanning segment. At 291–302 (STEKHIVNILRG) the chain is on the cytoplasmic side.

This sequence belongs to the G-protein coupled receptor 1 family.

It localises to the cell membrane. Its function is as follows. Putative pheromone receptor implicated in the regulation of social and reproductive behavior. This Mus musculus (Mouse) protein is Vomeronasal type-1 receptor 48 (Vmn1r48).